A 257-amino-acid chain; its full sequence is tRNA pseudouridine synthase A (257 aa).

Residue Asp52 is the Nucleophile of the active site. A substrate-binding site is contributed by Tyr111.

Belongs to the tRNA pseudouridine synthase TruA family. As to quaternary structure, homodimer.

The enzyme catalyses uridine(38/39/40) in tRNA = pseudouridine(38/39/40) in tRNA. Its function is as follows. Formation of pseudouridine at positions 38, 39 and 40 in the anticodon stem and loop of transfer RNAs. This Cereibacter sphaeroides (strain ATCC 17025 / ATH 2.4.3) (Rhodobacter sphaeroides) protein is tRNA pseudouridine synthase A.